We begin with the raw amino-acid sequence, 274 residues long: 2,3,4,5-tetrahydropyridine-2,6-dicarboxylate N-succinyltransferase (274 aa).

2 residues coordinate substrate: R107 and D144.

It belongs to the transferase hexapeptide repeat family. Homotrimer.

It localises to the cytoplasm. The enzyme catalyses (S)-2,3,4,5-tetrahydrodipicolinate + succinyl-CoA + H2O = (S)-2-succinylamino-6-oxoheptanedioate + CoA. Its pathway is amino-acid biosynthesis; L-lysine biosynthesis via DAP pathway; LL-2,6-diaminopimelate from (S)-tetrahydrodipicolinate (succinylase route): step 1/3. The polypeptide is 2,3,4,5-tetrahydropyridine-2,6-dicarboxylate N-succinyltransferase (Paracoccus denitrificans (strain Pd 1222)).